Consider the following 70-residue polypeptide: Peptide BmKn1 (70 aa).

The N-terminal stretch at 1 to 23 (MKSQTFFLLFLVVLLLAISQSEA) is a signal peptide. At phenylalanine 36 the chain carries Phenylalanine amide. A propeptide spanning residues 40–70 (SMRDMDTMKYLYDPSLSAADLKTLQKLMENY) is cleaved from the precursor.

It belongs to the non-disulfide-bridged peptide (NDBP) superfamily. Short antimicrobial peptide (group 4) family. As to expression, expressed by the venom gland.

It localises to the secreted. Its subcellular location is the target cell membrane. In terms of biological role, antibacterial peptide. In Olivierus martensii (Manchurian scorpion), this protein is Peptide BmKn1.